A 249-amino-acid chain; its full sequence is Tryptophan synthase alpha chain (249 aa).

Residues Glu-43 and Asp-54 each act as proton acceptor in the active site.

The protein belongs to the TrpA family. In terms of assembly, tetramer of two alpha and two beta chains.

The catalysed reaction is (1S,2R)-1-C-(indol-3-yl)glycerol 3-phosphate + L-serine = D-glyceraldehyde 3-phosphate + L-tryptophan + H2O. The protein operates within amino-acid biosynthesis; L-tryptophan biosynthesis; L-tryptophan from chorismate: step 5/5. In terms of biological role, the alpha subunit is responsible for the aldol cleavage of indoleglycerol phosphate to indole and glyceraldehyde 3-phosphate. The protein is Tryptophan synthase alpha chain of Campylobacter jejuni subsp. jejuni serotype O:23/36 (strain 81-176).